A 369-amino-acid polypeptide reads, in one-letter code: Ribonuclease D (369 aa).

The region spanning 1-166 is the 3'-5' exonuclease domain; sequence MITTNDALAA…PIAHKLMEQV (166 aa). The HRDC domain occupies 206–285; that stretch reads RPRQLACLKL…AQAQALLEDA (80 aa).

Belongs to the RNase D family. A divalent metal cation serves as cofactor.

The protein localises to the cytoplasm. The enzyme catalyses Exonucleolytic cleavage that removes extra residues from the 3'-terminus of tRNA to produce 5'-mononucleotides.. Its function is as follows. Exonuclease involved in the 3' processing of various precursor tRNAs. Initiates hydrolysis at the 3'-terminus of an RNA molecule and releases 5'-mononucleotides. The polypeptide is Ribonuclease D (Cronobacter turicensis (strain DSM 18703 / CCUG 55852 / LMG 23827 / z3032)).